A 120-amino-acid polypeptide reads, in one-letter code: ATP-dependent Clp protease adapter protein ClpS (120 aa).

Belongs to the ClpS family. As to quaternary structure, binds to the N-terminal domain of the chaperone ClpA.

Its function is as follows. Involved in the modulation of the specificity of the ClpAP-mediated ATP-dependent protein degradation. This chain is ATP-dependent Clp protease adapter protein ClpS, found in Azotobacter vinelandii (strain DJ / ATCC BAA-1303).